The primary structure comprises 133 residues: Holo-[acyl-carrier-protein] synthase (133 aa).

2 residues coordinate Mg(2+): Asp8 and Glu57.

The protein belongs to the P-Pant transferase superfamily. AcpS family. Mg(2+) is required as a cofactor.

The protein resides in the cytoplasm. It carries out the reaction apo-[ACP] + CoA = holo-[ACP] + adenosine 3',5'-bisphosphate + H(+). Functionally, transfers the 4'-phosphopantetheine moiety from coenzyme A to a Ser of acyl-carrier-protein. In Bartonella tribocorum (strain CIP 105476 / IBS 506), this protein is Holo-[acyl-carrier-protein] synthase.